A 182-amino-acid chain; its full sequence is Mitochondrial FAD-linked sulfhydryl oxidase erv1 (182 aa).

The 103-residue stretch at 75 to 177 folds into the ERV/ALR sulfhydryl oxidase domain; it reads RLPDVAELGR…FNCQVWSKKA (103 aa). FAD-binding positions include 81 to 87, H91, and Y120; that span reads ELGRSTW. 2 cysteine pairs are disulfide-bonded: C122-C125 and C153-C170. Residues 153-165 and 176-177 each bind FAD; these read CEAH…RLGK and KA.

It depends on FAD as a cofactor.

The protein localises to the mitochondrion intermembrane space. It carries out the reaction 2 R'C(R)SH + O2 = R'C(R)S-S(R)CR' + H2O2. Functionally, FAD-dependent sulfhydryl oxidase that catalyzes disulfide bond formation. Required for the import and folding of small cysteine-containing proteins in the mitochondrial intermembrane space (IMS). The protein is Mitochondrial FAD-linked sulfhydryl oxidase erv1 (erv1) of Schizosaccharomyces pombe (strain 972 / ATCC 24843) (Fission yeast).